Here is a 616-residue protein sequence, read N- to C-terminus: Chaperone protein HscA homolog (616 aa).

This sequence belongs to the heat shock protein 70 family.

In terms of biological role, chaperone involved in the maturation of iron-sulfur cluster-containing proteins. Has a low intrinsic ATPase activity which is markedly stimulated by HscB. The sequence is that of Chaperone protein HscA homolog from Vibrio atlanticus (strain LGP32) (Vibrio splendidus (strain Mel32)).